The chain runs to 506 residues: MDEYQVYLELDRSRNHDFLYPLIFREYIYGLAYGHDLNRSVFVENISYDNKSSLLIVKRLITRMYQQTYLIIFPNDSNKNPFWGYNNNFYSQIISEGFVIVVEIPFFLQFSSSLEETKIVKYYKNLRSIHSIFPLFEDKFTYLNHESDIRIPYPIHLEILVQILRYWIKDVPFLHLLRLFFYYYCNWNSLITPQKSISTFSKNNPRFFLFLFNFYVWEYESIFLFLRNKSTHLRLKSFRVLIERISFYAKVEHLVEVFAKDFSYTLSFFKDPFIHYVRYQGKSILVSKNMPLLMNKWKSYFIHLWQCHFDVWSQPRTIHIKQLSKHSFYFLGYFLNVQLNLSVVRSQMLQNSFLTEIVMKKLDTIVPIILLIRSLAKAKFCNVLGHPISKPVWADLSDFDIIDRFLWICRNFSQYYNGSSKKKSLYRIKYILRLSCIKTLSRKHKSTVRAFLKRLDSEKLLEEFFTEEEDIFSLIFSKTSSTLQRLYRGRIWYLDLLFSNDLINYS.

This sequence belongs to the intron maturase 2 family. MatK subfamily.

The protein localises to the plastid. The protein resides in the chloroplast. Its function is as follows. Usually encoded in the trnK tRNA gene intron. Probably assists in splicing its own and other chloroplast group II introns. This chain is Maturase K, found in Austrosteenisia blackii (Blood vine).